The primary structure comprises 341 residues: Glucokinase (341 aa).

18 to 23 (GDIGGT) serves as a coordination point for ATP.

The protein belongs to the bacterial glucokinase family.

It localises to the cytoplasm. The enzyme catalyses D-glucose + ATP = D-glucose 6-phosphate + ADP + H(+). The polypeptide is Glucokinase (Rhizobium johnstonii (strain DSM 114642 / LMG 32736 / 3841) (Rhizobium leguminosarum bv. viciae)).